Reading from the N-terminus, the 536-residue chain is Phosphoenolpyruvate carboxykinase (ATP) (536 aa).

Substrate is bound by residues R61, Y195, and K201. ATP contacts are provided by residues K201, H220, and G236–T244. Mn(2+)-binding residues include K201 and H220. D257 contributes to the Mn(2+) binding site. The ATP site is built by E285, R322, and T447. R322 provides a ligand contact to substrate.

Belongs to the phosphoenolpyruvate carboxykinase (ATP) family. It depends on Mn(2+) as a cofactor.

The protein resides in the cytoplasm. It catalyses the reaction oxaloacetate + ATP = phosphoenolpyruvate + ADP + CO2. Its pathway is carbohydrate biosynthesis; gluconeogenesis. In terms of biological role, involved in the gluconeogenesis. Catalyzes the conversion of oxaloacetate (OAA) to phosphoenolpyruvate (PEP) through direct phosphoryl transfer between the nucleoside triphosphate and OAA. In Chelativorans sp. (strain BNC1), this protein is Phosphoenolpyruvate carboxykinase (ATP).